A 201-amino-acid polypeptide reads, in one-letter code: ATP-dependent Clp protease proteolytic subunit (201 aa).

The Nucleophile role is filled by S97. Residue H122 is part of the active site.

This sequence belongs to the peptidase S14 family. As to quaternary structure, fourteen ClpP subunits assemble into 2 heptameric rings which stack back to back to give a disk-like structure with a central cavity, resembling the structure of eukaryotic proteasomes.

It is found in the cytoplasm. It catalyses the reaction Hydrolysis of proteins to small peptides in the presence of ATP and magnesium. alpha-casein is the usual test substrate. In the absence of ATP, only oligopeptides shorter than five residues are hydrolyzed (such as succinyl-Leu-Tyr-|-NHMec, and Leu-Tyr-Leu-|-Tyr-Trp, in which cleavage of the -Tyr-|-Leu- and -Tyr-|-Trp bonds also occurs).. Functionally, cleaves peptides in various proteins in a process that requires ATP hydrolysis. Has a chymotrypsin-like activity. Plays a major role in the degradation of misfolded proteins. The protein is ATP-dependent Clp protease proteolytic subunit of Nitratidesulfovibrio vulgaris (strain DSM 19637 / Miyazaki F) (Desulfovibrio vulgaris).